We begin with the raw amino-acid sequence, 463 residues long: Soluble pyridine nucleotide transhydrogenase (463 aa).

FAD is bound at residue 35-44 (EDKPTVGGNC).

It belongs to the class-I pyridine nucleotide-disulfide oxidoreductase family. The cofactor is FAD.

The protein resides in the cytoplasm. The catalysed reaction is NAD(+) + NADPH = NADH + NADP(+). In terms of biological role, conversion of NADPH, generated by peripheral catabolic pathways, to NADH, which can enter the respiratory chain for energy generation. This Marinobacter nauticus (strain ATCC 700491 / DSM 11845 / VT8) (Marinobacter aquaeolei) protein is Soluble pyridine nucleotide transhydrogenase.